The sequence spans 922 residues: MDGKRKIEHTADGTHYDATSNVKRKPIFPPFIADSLSEATEKANVMGGGMNSRLQILSEMSKRVQATAPISSLEHFKQLSDISPSFTSSANSINQPYNYSGSLENLVPTPSAGTPSQFMDAQNPYGAVYNALSQFSETEPKMPSYMDDEEASDSLPLSLSSQSLSSQVTNQKPAPHRLTMRERYAANNLTNGLQFTLPLSSRKTYEPEADDDSNDDMYSDDDSNADRWASRIDTAALKEEVLKYMNRCSTQDLADMTGCTLAEAEFMVAKRPFPDLESALVVKQPRPVIPKGRRGRREKTPLGPRLVGICMEIMRGYFVVDALIRQCEQLGGKIQRGIEAWGLSNTATSDEGETSLVNFDQMKSFGTPANSSFITTPPASFSPDIKLQDYQIIGINWLYLLYELKLAGILADEMGLGKTCQTIAFFSLLMDKNINGPHLVIAPASTMENWLREFAKFCPKLKIELYYGSQVEREEIRERINSNKDSYNVMLTTYRLAATSKADRLFLRNQKFNVCVYDEGHYLKNRASERYRHLMSIPADFRVLLTGTPLQNNLKELISLLAFILPHVFDYGLKSLDVIFTMKKSPESDFERALLSEQRVSRAKMMMAPFVLRRKKSQVLDALPKKTRIIEFCEFSEEERRRYDDFASKQSVNSLLDENVMKTNLDTNANLAKKKSTAGFVLVQLRKLADHPMLFRIHYKDDILRQMAKAIMNEPQYKKANELYIFEDMQYMSDIELHNLCCKFPSINSFQLKDEPWMDATKVRKLKKLLTNAVENGDRVVLFSQFTQVLDILQLVMKSLNLKFLRFDGSTQVDFRQDLIDQFYADESINVFLLSTKAGGFGINLACANMVILYDVSFNPFDDLQAEDRAHRVGQKKEVTVYKFVVKDTIEEHIQRLANAKIALDATLSGNAETVEAEDDDD.

Disordered stretches follow at residues glutamate 139 to arginine 177 and proline 198 to asparagine 224. A compositionally biased stretch (low complexity) spans aspartate 153 to serine 166. The segment covering proline 207–serine 223 has biased composition (acidic residues). A phosphoserine mark is found at serine 213 and serine 219. One can recognise a Helicase ATP-binding domain in the interval tyrosine 399–histidine 567. Position 412–419 (aspartate 412–threonine 419) interacts with ATP. The DEGH box signature appears at aspartate 518–histidine 521. At serine 617 the chain carries Phosphoserine. The Helicase C-terminal domain maps to lysine 765–aspartate 922.

Belongs to the SNF2/RAD54 helicase family. Interacts with the GDP-bound form of spi1.

It is found in the nucleus. The protein resides in the chromosome. The enzyme catalyses ATP + H2O = ADP + phosphate + H(+). DNA helicase that possesses intrinsic ATP-dependent nucleosome-remodeling activity and is required for heterochromatin organization. Required for maintaining a heterochromatin chromatin structure at centromeres and subtelomeres by protecting these regions from euchromatin assembly. Enhances the nucleotide exchange activity of the pim1 guanine nucleotide exchange factor and abolishes histone-H3-mediated RanGAP inhibition. Involved in the construction of the centromeres. This chain is ATP-dependent helicase fft3 (fft3), found in Schizosaccharomyces pombe (strain 972 / ATCC 24843) (Fission yeast).